Reading from the N-terminus, the 365-residue chain is Ribosomal RNA large subunit methyltransferase M (365 aa).

S-adenosyl-L-methionine contacts are provided by residues Ser-188, 221–224 (CPGG), Asp-240, Asp-260, and Asp-277. Lys-306 (proton acceptor) is an active-site residue.

The protein belongs to the class I-like SAM-binding methyltransferase superfamily. RNA methyltransferase RlmE family. RlmM subfamily. As to quaternary structure, monomer.

Its subcellular location is the cytoplasm. It catalyses the reaction cytidine(2498) in 23S rRNA + S-adenosyl-L-methionine = 2'-O-methylcytidine(2498) in 23S rRNA + S-adenosyl-L-homocysteine + H(+). Its function is as follows. Catalyzes the 2'-O-methylation at nucleotide C2498 in 23S rRNA. The polypeptide is Ribosomal RNA large subunit methyltransferase M (Proteus mirabilis (strain HI4320)).